A 127-amino-acid chain; its full sequence is Large ribosomal subunit protein bL19 (127 aa).

This sequence belongs to the bacterial ribosomal protein bL19 family.

This protein is located at the 30S-50S ribosomal subunit interface and may play a role in the structure and function of the aminoacyl-tRNA binding site. In Ruegeria pomeroyi (strain ATCC 700808 / DSM 15171 / DSS-3) (Silicibacter pomeroyi), this protein is Large ribosomal subunit protein bL19.